Consider the following 229-residue polypeptide: General odorant-binding protein 69 (229 aa).

A signal peptide spans 1–20 (MDRLLLVLLSSASLLLTVYG). Residues Cys-66 and Cys-106 are joined by a disulfide bond.

The protein belongs to the PBP/GOBP family.

The protein localises to the secreted. Functionally, present in the aqueous fluid surrounding olfactory sensory dendrites and are thought to aid in the capture and transport of hydrophobic odorants into and through this fluid. The chain is General odorant-binding protein 69 (Obp69) from Anopheles gambiae (African malaria mosquito).